A 219-amino-acid polypeptide reads, in one-letter code: Cytochrome c oxidase assembly protein CtaG (219 aa).

Polar residues predominate over residues 1–13 (MDATDQGKSTSTT). Positions 1-24 (MDATDQGKSTSTTAAQAAPGKAAP) are disordered. Topologically, residues 1–29 (MDATDQGKSTSTTAAQAAPGKAAPRRGIG) are cytoplasmic. The span at 14–24 (AAQAAPGKAAP) shows a compositional bias: low complexity. The chain crosses the membrane as a helical; Signal-anchor for type II membrane protein span at residues 30-52 (RDALVGGICGAVVVLMIGASYAA). The Periplasmic portion of the chain corresponds to 53–219 (VPFYNWFCRA…GEPDKPRGSL (167 aa)).

The protein belongs to the COX11/CtaG family.

It is found in the cell inner membrane. Its function is as follows. Exerts its effect at some terminal stage of cytochrome c oxidase synthesis, probably by being involved in the insertion of the copper B into subunit I. This chain is Cytochrome c oxidase assembly protein CtaG, found in Bradyrhizobium sp. (strain ORS 278).